A 226-amino-acid polypeptide reads, in one-letter code: 2,3-bisphosphoglycerate-dependent phosphoglycerate mutase (226 aa).

Residues 8–15, 21–22, Arg58, 109–112, Lys120, 136–137, and 180–181 contribute to the substrate site; these read RHGQSVWN, TG, ERMY, RR, and GN. The active-site Tele-phosphohistidine intermediate is the His9. Residue Glu109 is the Proton donor/acceptor of the active site.

The protein belongs to the phosphoglycerate mutase family. BPG-dependent PGAM subfamily.

The catalysed reaction is (2R)-2-phosphoglycerate = (2R)-3-phosphoglycerate. It functions in the pathway carbohydrate degradation; glycolysis; pyruvate from D-glyceraldehyde 3-phosphate: step 3/5. In terms of biological role, catalyzes the interconversion of 2-phosphoglycerate and 3-phosphoglycerate. The sequence is that of 2,3-bisphosphoglycerate-dependent phosphoglycerate mutase from Chlamydia trachomatis serovar L2b (strain UCH-1/proctitis).